A 273-amino-acid chain; its full sequence is Programmed cell death 1 ligand 2 (273 aa).

A signal peptide spans 1–19 (MIFLLLMLSLELQLHQIAA). The Extracellular portion of the chain corresponds to 20–220 (LFTVTVPKEL…SQMEPRTHPT (201 aa)). In terms of domain architecture, Ig-like V-type spans 21–118 (FTVTVPKELY…AWDYKYLTLK (98 aa)). 5 N-linked (GlcNAc...) asparagine glycosylation sites follow: Asn37, Asn64, Asn157, Asn163, and Asn189. Intrachain disulfides connect Cys42/Cys102 and Cys143/Cys192. Residues 122–203 (SYRKINTHIL…FWNTHVRELT (82 aa)) enclose the Ig-like C2-type domain. A helical membrane pass occupies residues 221–241 (WLLHIFIPFCIIAFIFIATVI). The Cytoplasmic segment spans residues 242-273 (ALRKQLCQKLYSSKDTTKRPVTTTKREVNSAI).

This sequence belongs to the immunoglobulin superfamily. BTN/MOG family. Interacts with PDCD1. Highly expressed in heart, placenta, pancreas, lung and liver and weakly expressed in spleen, lymph nodes and thymus.

It is found in the secreted. Its subcellular location is the endomembrane system. The protein resides in the cell membrane. In terms of biological role, involved in the costimulatory signal, essential for T-cell proliferation and IFNG production in a PDCD1-independent manner. Interaction with PDCD1 inhibits T-cell proliferation by blocking cell cycle progression and cytokine production. This is Programmed cell death 1 ligand 2 (PDCD1LG2) from Homo sapiens (Human).